The sequence spans 261 residues: Carbonic anhydrase 1 (261 aa).

A disordered region spans residues 1–31 (MASPDWGYDDKNGPEQWSKLYPIANGNNQSP). At Ala2 the chain carries N-acetylalanine. The Alpha-carbonic anhydrase domain maps to 4 to 261 (PDWGYDDKNG…LKGRTVRASF (258 aa)). Residue His65 is the Proton donor/acceptor of the active site. His95, His97, and His120 together coordinate Zn(2+). Substrate is bound by residues Thr200 and 200-201 (TH). The tract at residues 240–261 (VPMQHNNRPTQPLKGRTVRASF) is disordered.

The protein belongs to the alpha-carbonic anhydrase family. Requires Zn(2+) as cofactor.

The protein resides in the cytoplasm. The catalysed reaction is hydrogencarbonate + H(+) = CO2 + H2O. It carries out the reaction urea = cyanamide + H2O. Its activity is regulated as follows. Inhibited by acetazolamide. Functionally, catalyzes the reversible hydration of carbon dioxide. Can hydrate cyanamide to urea. The polypeptide is Carbonic anhydrase 1 (CA1) (Gorilla gorilla gorilla (Western lowland gorilla)).